The chain runs to 116 residues: Large ribosomal subunit protein bL20 (116 aa).

This sequence belongs to the bacterial ribosomal protein bL20 family.

Functionally, binds directly to 23S ribosomal RNA and is necessary for the in vitro assembly process of the 50S ribosomal subunit. It is not involved in the protein synthesizing functions of that subunit. This chain is Large ribosomal subunit protein bL20, found in Desulforapulum autotrophicum (strain ATCC 43914 / DSM 3382 / VKM B-1955 / HRM2) (Desulfobacterium autotrophicum).